A 619-amino-acid polypeptide reads, in one-letter code: DNA mismatch repair protein MutL (619 aa).

Belongs to the DNA mismatch repair MutL/HexB family.

Its function is as follows. This protein is involved in the repair of mismatches in DNA. It is required for dam-dependent methyl-directed DNA mismatch repair. May act as a 'molecular matchmaker', a protein that promotes the formation of a stable complex between two or more DNA-binding proteins in an ATP-dependent manner without itself being part of a final effector complex. The sequence is that of DNA mismatch repair protein MutL from Myxococcus xanthus (strain DK1622).